A 499-amino-acid chain; its full sequence is Glycerol kinase (499 aa).

An ADP-binding site is contributed by threonine 12. Positions 12, 13, and 14 each coordinate ATP. Threonine 12 provides a ligand contact to sn-glycerol 3-phosphate. Arginine 16 lines the ADP pocket. Sn-glycerol 3-phosphate is bound by residues arginine 82, glutamate 83, tyrosine 135, and aspartate 245. Arginine 82, glutamate 83, tyrosine 135, aspartate 245, and glutamine 246 together coordinate glycerol. Positions 267 and 310 each coordinate ADP. Positions 267, 310, 314, and 411 each coordinate ATP. 2 residues coordinate ADP: glycine 411 and asparagine 415.

Belongs to the FGGY kinase family. As to quaternary structure, homotetramer and homodimer (in equilibrium).

It carries out the reaction glycerol + ATP = sn-glycerol 3-phosphate + ADP + H(+). It functions in the pathway polyol metabolism; glycerol degradation via glycerol kinase pathway; sn-glycerol 3-phosphate from glycerol: step 1/1. Activated by phosphorylation and inhibited by fructose 1,6-bisphosphate (FBP). Key enzyme in the regulation of glycerol uptake and metabolism. Catalyzes the phosphorylation of glycerol to yield sn-glycerol 3-phosphate. This is Glycerol kinase from Clostridium beijerinckii (strain ATCC 51743 / NCIMB 8052) (Clostridium acetobutylicum).